The primary structure comprises 197 residues: Negative modulator of initiation of replication (197 aa).

Interaction with DNA regions lie at residues 100–101 (AV), 129–133 (RTRVY), and 163–169 (NTNSGRK).

Belongs to the SeqA family. In terms of assembly, homodimer. Polymerizes to form helical filaments.

It localises to the cytoplasm. Its function is as follows. Negative regulator of replication initiation, which contributes to regulation of DNA replication and ensures that replication initiation occurs exactly once per chromosome per cell cycle. Binds to pairs of hemimethylated GATC sequences in the oriC region, thus preventing assembly of replication proteins and re-initiation at newly replicated origins. Repression is relieved when the region becomes fully methylated. This chain is Negative modulator of initiation of replication, found in Haemophilus influenzae (strain ATCC 51907 / DSM 11121 / KW20 / Rd).